Reading from the N-terminus, the 236-residue chain is ATP synthase subunit a, chloroplastic (236 aa).

The next 5 helical transmembrane spans lie at 25-45, 87-107, 123-143, 180-202, and 210-230; these read MHGQVLINSWIVLGLIIAFAV, FIGTLFLFIFVSNWSGALIPW, DINTTVALALLTSLTYFYAGL, LFGNILADELVVAVLVSLVPLVI, and GLFTSGIQALIFATLAGAYIG.

The protein belongs to the ATPase A chain family. In terms of assembly, F-type ATPases have 2 components, CF(1) - the catalytic core - and CF(0) - the membrane proton channel. CF(1) has five subunits: alpha(3), beta(3), gamma(1), delta(1), epsilon(1). CF(0) has four main subunits: a, b, b' and c.

The protein localises to the plastid. Its subcellular location is the chloroplast thylakoid membrane. In terms of biological role, key component of the proton channel; it plays a direct role in the translocation of protons across the membrane. The chain is ATP synthase subunit a, chloroplastic from Ostreococcus tauri.